We begin with the raw amino-acid sequence, 980 residues long: Exportin-T (980 aa).

It belongs to the exportin family. Expressed in roots, stems, leaves, flowers and embryos.

The protein resides in the nucleus. The protein localises to the cytoplasm. Functionally, probable tRNA nucleus export receptor which regulates tRNA processing and facilitates tRNA translocation across the nuclear pore complex. Is required for correct leaf initiation at different developmental stages and may play a role in floral patterning. The chain is Exportin-T from Oryza sativa subsp. japonica (Rice).